The sequence spans 348 residues: GTP 3',8-cyclase (348 aa).

A Radical SAM core domain is found at 24–248 (PFGRAVTYLR…TDIDYQTGGP (225 aa)). A GTP-binding site is contributed by Arg33. Residues Cys40 and Cys44 each coordinate [4Fe-4S] cluster. Tyr46 is an S-adenosyl-L-methionine binding site. A [4Fe-4S] cluster-binding site is contributed by Cys47. Arg82 provides a ligand contact to GTP. Position 86 (Gly86) interacts with S-adenosyl-L-methionine. Thr115 contributes to the GTP binding site. Residue Ser139 participates in S-adenosyl-L-methionine binding. Lys175 serves as a coordination point for GTP. Residue Met209 coordinates S-adenosyl-L-methionine. Positions 272 and 275 each coordinate [4Fe-4S] cluster. GTP is bound at residue 277–279 (RVR). Cys289 provides a ligand contact to [4Fe-4S] cluster.

The protein belongs to the radical SAM superfamily. MoaA family. Monomer and homodimer. [4Fe-4S] cluster serves as cofactor.

The enzyme catalyses GTP + AH2 + S-adenosyl-L-methionine = (8S)-3',8-cyclo-7,8-dihydroguanosine 5'-triphosphate + 5'-deoxyadenosine + L-methionine + A + H(+). Its pathway is cofactor biosynthesis; molybdopterin biosynthesis. Functionally, catalyzes the cyclization of GTP to (8S)-3',8-cyclo-7,8-dihydroguanosine 5'-triphosphate. The sequence is that of GTP 3',8-cyclase from Rhizobium etli (strain ATCC 51251 / DSM 11541 / JCM 21823 / NBRC 15573 / CFN 42).